Consider the following 286-residue polypeptide: Phosphatidylserine decarboxylase proenzyme (286 aa).

Catalysis depends on charge relay system; for autoendoproteolytic cleavage activity residues D91, H148, and S251. Catalysis depends on S251, which acts as the Schiff-base intermediate with substrate; via pyruvic acid; for decarboxylase activity. Residue S251 is modified to Pyruvic acid (Ser); by autocatalysis.

This sequence belongs to the phosphatidylserine decarboxylase family. PSD-B subfamily. Prokaryotic type I sub-subfamily. Heterodimer of a large membrane-associated beta subunit and a small pyruvoyl-containing alpha subunit. Pyruvate serves as cofactor. Post-translationally, is synthesized initially as an inactive proenzyme. Formation of the active enzyme involves a self-maturation process in which the active site pyruvoyl group is generated from an internal serine residue via an autocatalytic post-translational modification. Two non-identical subunits are generated from the proenzyme in this reaction, and the pyruvate is formed at the N-terminus of the alpha chain, which is derived from the carboxyl end of the proenzyme. The autoendoproteolytic cleavage occurs by a canonical serine protease mechanism, in which the side chain hydroxyl group of the serine supplies its oxygen atom to form the C-terminus of the beta chain, while the remainder of the serine residue undergoes an oxidative deamination to produce ammonia and the pyruvoyl prosthetic group on the alpha chain. During this reaction, the Ser that is part of the protease active site of the proenzyme becomes the pyruvoyl prosthetic group, which constitutes an essential element of the active site of the mature decarboxylase.

The protein localises to the cell membrane. It carries out the reaction a 1,2-diacyl-sn-glycero-3-phospho-L-serine + H(+) = a 1,2-diacyl-sn-glycero-3-phosphoethanolamine + CO2. It functions in the pathway phospholipid metabolism; phosphatidylethanolamine biosynthesis; phosphatidylethanolamine from CDP-diacylglycerol: step 2/2. Functionally, catalyzes the formation of phosphatidylethanolamine (PtdEtn) from phosphatidylserine (PtdSer). The protein is Phosphatidylserine decarboxylase proenzyme of Marinobacter nauticus (strain ATCC 700491 / DSM 11845 / VT8) (Marinobacter aquaeolei).